Reading from the N-terminus, the 171-residue chain is Putative rhomboid protein L523 (171 aa).

The next 4 membrane-spanning stretches (helical) occupy residues 3–23 (YVTY…LNFF), 67–87 (FAFC…AEHT), 94–114 (VYTV…LMSL), and 119–139 (GLSI…SGIS). Ser-100 serves as the catalytic Nucleophile. His-143 is a catalytic residue. A helical membrane pass occupies residues 144–164 (ICGMIAGFVYVVLFPLPKGSV).

Belongs to the peptidase S54 family.

It localises to the membrane. Its function is as follows. Probable serine protease. The chain is Putative rhomboid protein L523 from Acanthamoeba polyphaga mimivirus (APMV).